The sequence spans 467 residues: ATP synthase subunit beta 1 (467 aa).

150 to 157 lines the ATP pocket; the sequence is GGAGVGKT.

This sequence belongs to the ATPase alpha/beta chains family. F-type ATPases have 2 components, CF(1) - the catalytic core - and CF(0) - the membrane proton channel. CF(1) has five subunits: alpha(3), beta(3), gamma(1), delta(1), epsilon(1). CF(0) has three main subunits: a(1), b(2) and c(9-12). The alpha and beta chains form an alternating ring which encloses part of the gamma chain. CF(1) is attached to CF(0) by a central stalk formed by the gamma and epsilon chains, while a peripheral stalk is formed by the delta and b chains.

Its subcellular location is the cell inner membrane. It catalyses the reaction ATP + H2O + 4 H(+)(in) = ADP + phosphate + 5 H(+)(out). Produces ATP from ADP in the presence of a proton gradient across the membrane. The catalytic sites are hosted primarily by the beta subunits. The sequence is that of ATP synthase subunit beta 1 from Vibrio campbellii (strain ATCC BAA-1116).